The following is a 230-amino-acid chain: Protein GrpE (230 aa).

Disordered regions lie at residues 1-28 (MADE…EALK) and 209-230 (GVSK…EDNA). A compositionally biased stretch (polar residues) spans 221-230 (NGASTSEDNA).

Belongs to the GrpE family. In terms of assembly, homodimer.

Its subcellular location is the cytoplasm. Functionally, participates actively in the response to hyperosmotic and heat shock by preventing the aggregation of stress-denatured proteins, in association with DnaK and GrpE. It is the nucleotide exchange factor for DnaK and may function as a thermosensor. Unfolded proteins bind initially to DnaJ; upon interaction with the DnaJ-bound protein, DnaK hydrolyzes its bound ATP, resulting in the formation of a stable complex. GrpE releases ADP from DnaK; ATP binding to DnaK triggers the release of the substrate protein, thus completing the reaction cycle. Several rounds of ATP-dependent interactions between DnaJ, DnaK and GrpE are required for fully efficient folding. This is Protein GrpE from Brucella ovis (strain ATCC 25840 / 63/290 / NCTC 10512).